The chain runs to 352 residues: Chorismate synthase (352 aa).

NADP(+) is bound by residues Arg48 and Arg54. Residues Arg125–Ser127, Asn238–Ala239, Gly278, Lys293–Ser297, and Arg319 each bind FMN.

The protein belongs to the chorismate synthase family. In terms of assembly, homotetramer. It depends on FMNH2 as a cofactor.

The enzyme catalyses 5-O-(1-carboxyvinyl)-3-phosphoshikimate = chorismate + phosphate. It participates in metabolic intermediate biosynthesis; chorismate biosynthesis; chorismate from D-erythrose 4-phosphate and phosphoenolpyruvate: step 7/7. Its function is as follows. Catalyzes the anti-1,4-elimination of the C-3 phosphate and the C-6 proR hydrogen from 5-enolpyruvylshikimate-3-phosphate (EPSP) to yield chorismate, which is the branch point compound that serves as the starting substrate for the three terminal pathways of aromatic amino acid biosynthesis. This reaction introduces a second double bond into the aromatic ring system. The sequence is that of Chorismate synthase from Bordetella avium (strain 197N).